The sequence spans 301 residues: Protein RESTRICTED TEV MOVEMENT 3 (301 aa).

The MATH domain maps to 6 to 134 (DKKITWTIKN…NGELKIVVEI (129 aa)). Positions 235–289 (KLDWLEKKLYEVSEKKENEEASETGLQEMEEELKDMKQKCLEMEALVEKEKAKVS) form a coiled coil.

In terms of assembly, self-interacts. Interacts with RTM1.

Its function is as follows. Required for the restriction of long-distance movement of the pathogenic tobacco etch virus (TEV) without causing a hypersensitive response or inducing systemic acquired resistance. The chain is Protein RESTRICTED TEV MOVEMENT 3 (RTM3) from Arabidopsis thaliana (Mouse-ear cress).